A 290-amino-acid chain; its full sequence is Arylamine N-acetyltransferase 1 (290 aa).

An N-acetylmethionine modification is found at M1. C68 serves as the catalytic Acyl-thioester intermediate. S103 provides a ligand contact to CoA. 106-107 (VH) contacts substrate. Residues H107 and D122 contribute to the active site. Y208 is a binding site for CoA.

It belongs to the arylamine N-acetyltransferase family.

It localises to the cytoplasm. It catalyses the reaction an arylamine + acetyl-CoA = an N-acetylarylamine + CoA. Functionally, participates in the detoxification of a plethora of hydrazine and arylamine drugs. Isoniazid, 2-aminofluorene and anisidine are preferred substrates for NAT-1. No activity with p-aminobenzoic acid (PABA) nor SMZ. This chain is Arylamine N-acetyltransferase 1 (Nat1), found in Mus musculus (Mouse).